Consider the following 352-residue polypeptide: RNA 3'-terminal phosphate cyclase (352 aa).

Residues glutamine 100 and 297 to 301 contribute to the ATP site; that span reads HLADQ. Histidine 322 acts as the Tele-AMP-histidine intermediate in catalysis.

This sequence belongs to the RNA 3'-terminal cyclase family. Type 1 subfamily.

The protein resides in the cytoplasm. It carries out the reaction a 3'-end 3'-phospho-ribonucleotide-RNA + ATP = a 3'-end 2',3'-cyclophospho-ribonucleotide-RNA + AMP + diphosphate. Functionally, catalyzes the conversion of 3'-phosphate to a 2',3'-cyclic phosphodiester at the end of RNA. The mechanism of action of the enzyme occurs in 3 steps: (A) adenylation of the enzyme by ATP; (B) transfer of adenylate to an RNA-N3'P to produce RNA-N3'PP5'A; (C) and attack of the adjacent 2'-hydroxyl on the 3'-phosphorus in the diester linkage to produce the cyclic end product. The biological role of this enzyme is unknown but it is likely to function in some aspects of cellular RNA processing. This Methanosarcina mazei (strain ATCC BAA-159 / DSM 3647 / Goe1 / Go1 / JCM 11833 / OCM 88) (Methanosarcina frisia) protein is RNA 3'-terminal phosphate cyclase.